Here is a 93-residue protein sequence, read N- to C-terminus: Small ribosomal subunit protein bS18 (93 aa).

Belongs to the bacterial ribosomal protein bS18 family. Part of the 30S ribosomal subunit. Forms a tight heterodimer with protein bS6.

Binds as a heterodimer with protein bS6 to the central domain of the 16S rRNA, where it helps stabilize the platform of the 30S subunit. The sequence is that of Small ribosomal subunit protein bS18 from Verminephrobacter eiseniae (strain EF01-2).